The following is a 131-amino-acid chain: Large ribosomal subunit protein bL17 (131 aa).

The protein belongs to the bacterial ribosomal protein bL17 family. Part of the 50S ribosomal subunit. Contacts protein L32.

This chain is Large ribosomal subunit protein bL17, found in Burkholderia multivorans (strain ATCC 17616 / 249).